Here is a 178-residue protein sequence, read N- to C-terminus: Large ribosomal subunit protein uL6 (178 aa).

The protein belongs to the universal ribosomal protein uL6 family. As to quaternary structure, part of the 50S ribosomal subunit.

This protein binds to the 23S rRNA, and is important in its secondary structure. It is located near the subunit interface in the base of the L7/L12 stalk, and near the tRNA binding site of the peptidyltransferase center. This is Large ribosomal subunit protein uL6 from Methanobrevibacter smithii (strain ATCC 35061 / DSM 861 / OCM 144 / PS).